The following is a 121-amino-acid chain: Ribosome-binding factor A (121 aa).

Belongs to the RbfA family. As to quaternary structure, monomer. Binds 30S ribosomal subunits, but not 50S ribosomal subunits or 70S ribosomes.

It is found in the cytoplasm. Functionally, one of several proteins that assist in the late maturation steps of the functional core of the 30S ribosomal subunit. Associates with free 30S ribosomal subunits (but not with 30S subunits that are part of 70S ribosomes or polysomes). Required for efficient processing of 16S rRNA. May interact with the 5'-terminal helix region of 16S rRNA. The sequence is that of Ribosome-binding factor A from Oenococcus oeni (strain ATCC BAA-331 / PSU-1).